Reading from the N-terminus, the 181-residue chain is ADP-ribosylation factor 1 (181 aa).

Gly-2 carries the N-myristoyl glycine lipid modification. Residues 24–31 (GLDAAGKT), 67–71 (DVGGQ), and 126–129 (NKQD) contribute to the GTP site.

It belongs to the small GTPase superfamily. Arf family.

It localises to the golgi apparatus. It carries out the reaction GTP + H2O = GDP + phosphate + H(+). In terms of biological role, GTP-binding protein involved in protein trafficking; may modulate vesicle budding and uncoating within the Golgi apparatus. The polypeptide is ADP-ribosylation factor 1 (ARF1) (Chlamydomonas reinhardtii (Chlamydomonas smithii)).